A 320-amino-acid polypeptide reads, in one-letter code: Nicotianamine synthase 2 (320 aa).

The protein belongs to the nicotianamine synthase (NAS)-like family.

The enzyme catalyses 3 S-adenosyl-L-methionine = nicotianamine + 3 S-methyl-5'-thioadenosine + 3 H(+). Functionally, synthesizes nicotianamine, a polyamine which serves as a sensor for the physiological iron status within the plant, and/or might be involved in the transport of iron. In Arabidopsis thaliana (Mouse-ear cress), this protein is Nicotianamine synthase 2 (NAS2).